We begin with the raw amino-acid sequence, 452 residues long: Transcription factor SMP1 (452 aa).

An MADS-box domain is found at 3 to 57 (RRKIEIEPIKDDRNRTVTFIKRKAGLFKKAHELSVLCQVDIAVIILGSNNTFYEY). The mef2-type DNA-binding region spans 58–87 (SSVDMSNLLNVHQNNTDLPHNIIEPSDYGD). The interval 97-142 (NERKRRRRRATVLQPASHSGSCTVSSQDSSSVQNNGNLSAPLASND) is disordered. Low complexity predominate over residues 115 to 127 (SGSCTVSSQDSSS).

It belongs to the MEF2 family. Can heterodimerize with RLM1. Interacts with HOG1. In terms of processing, phosphorylated by HOG1.

It localises to the nucleus. Transcription factor that controls part of the HOG1-mediated osmostress responses. Binds to the DNA sequence 5'-ACTACTA[TA](4)TAG-3'. Does not appear to function in the MPK1 pathway. The protein is Transcription factor SMP1 (SMP1) of Saccharomyces cerevisiae (strain ATCC 204508 / S288c) (Baker's yeast).